We begin with the raw amino-acid sequence, 369 residues long: Anhydro-N-acetylmuramic acid kinase (369 aa).

12–19 serves as a coordination point for ATP; sequence GTSLDGVD.

It belongs to the anhydro-N-acetylmuramic acid kinase family.

It catalyses the reaction 1,6-anhydro-N-acetyl-beta-muramate + ATP + H2O = N-acetyl-D-muramate 6-phosphate + ADP + H(+). It functions in the pathway amino-sugar metabolism; 1,6-anhydro-N-acetylmuramate degradation. Its pathway is cell wall biogenesis; peptidoglycan recycling. Catalyzes the specific phosphorylation of 1,6-anhydro-N-acetylmuramic acid (anhMurNAc) with the simultaneous cleavage of the 1,6-anhydro ring, generating MurNAc-6-P. Is required for the utilization of anhMurNAc either imported from the medium or derived from its own cell wall murein, and thus plays a role in cell wall recycling. The protein is Anhydro-N-acetylmuramic acid kinase of Escherichia coli O1:K1 / APEC.